Reading from the N-terminus, the 88-residue chain is Large ribosomal subunit protein bL27 (88 aa).

The segment at Met-1–Leu-21 is disordered.

This sequence belongs to the bacterial ribosomal protein bL27 family.

This chain is Large ribosomal subunit protein bL27, found in Picosynechococcus sp. (strain ATCC 27264 / PCC 7002 / PR-6) (Agmenellum quadruplicatum).